A 360-amino-acid chain; its full sequence is Photosystem II protein D1 2 (360 aa).

Residues 1-31 (MTTTLQQRESASLWEQFCQWVTSTNNRIYVG) are Cytoplasmic-facing. The chain crosses the membrane as a helical span at residues 32 to 53 (WFGTLMIPTLLTATTCFIIAFI). At 54–110 (AAPPVDIDGIREPVAGSLLYGNNIISGAVVPSSNAIGLHFYPIWEAASLDEWLYNGG) the chain is on the lumenal, thylakoid side. The chain crosses the membrane as a helical span at residues 111–134 (PYQLVVFHFLIGIFCYMGRQWELS). His118 contacts chlorophyll a. Tyr126 serves as a coordination point for pheophytin a. The Cytoplasmic segment spans residues 135–142 (YRLGMRPW). The chain crosses the membrane as a helical span at residues 143-161 (ICVAYSAPVSAATAVFLIY). Tyr147 lines the pheophytin a pocket. Topologically, residues 162–191 (PIGQGSFSDGMPLGISGTFNFMIVFQAEHN) are lumenal, thylakoid. Positions 170 and 189 each coordinate [CaMn4O5] cluster. A helical transmembrane segment spans residues 192 to 218 (ILMHPFHMLGVAGVFGGSLFSAMHGSL). Position 198 (His198) interacts with chlorophyll a. His215, Ser264, and Phe265 together coordinate a quinone. His215 is a binding site for Fe cation. At 219 to 270 (VTSSLVRETTEVESQNYGYKFGQEEETYNIVAAHGYFGRLIFQYASFNNSRS) the chain is on the cytoplasmic side. The helical transmembrane segment at 271-295 (LHFFLGAWPVIGIWFTAMGVSTMAF) threads the bilayer. Residue His272 participates in Fe cation binding. At 296 to 360 (NLNGFNFNQS…VALTAPAVNG (65 aa)) the chain is on the lumenal, thylakoid side. Residues His332, Glu333, His337, Asp342, and Ala344 each coordinate [CaMn4O5] cluster. A propeptide spanning residues 345 to 360 (SGEQAPVALTAPAVNG) is cleaved from the precursor.

The protein belongs to the reaction center PufL/M/PsbA/D family. As to quaternary structure, PSII is composed of 1 copy each of membrane proteins PsbA, PsbB, PsbC, PsbD, PsbE, PsbF, PsbH, PsbI, PsbJ, PsbK, PsbL, PsbM, PsbT, PsbX, PsbY, PsbZ, Psb30/Ycf12, peripheral proteins PsbO, CyanoQ (PsbQ), PsbU, PsbV and a large number of cofactors. It forms dimeric complexes. The cofactor is The D1/D2 heterodimer binds P680, chlorophylls that are the primary electron donor of PSII, and subsequent electron acceptors. It shares a non-heme iron and each subunit binds pheophytin, quinone, additional chlorophylls, carotenoids and lipids. D1 provides most of the ligands for the Mn4-Ca-O5 cluster of the oxygen-evolving complex (OEC). There is also a Cl(-1) ion associated with D1 and D2, which is required for oxygen evolution. The PSII complex binds additional chlorophylls, carotenoids and specific lipids.. In terms of processing, C-terminally processed by CtpA; processing is essential to allow assembly of the oxygen-evolving complex and photosynthetic growth. Tyr-161 forms a radical intermediate that is referred to as redox-active TyrZ, YZ or Y-Z.

It is found in the cellular thylakoid membrane. It carries out the reaction 2 a plastoquinone + 4 hnu + 2 H2O = 2 a plastoquinol + O2. Its function is as follows. Photosystem II (PSII) is a light-driven water:plastoquinone oxidoreductase that uses light energy to abstract electrons from H(2)O, generating O(2) and a proton gradient subsequently used for ATP formation. It consists of a core antenna complex that captures photons, and an electron transfer chain that converts photonic excitation into a charge separation. The D1/D2 (PsbA/PsbD) reaction center heterodimer binds P680, the primary electron donor of PSII as well as several subsequent electron acceptors. The chain is Photosystem II protein D1 2 from Synechocystis sp. (strain ATCC 27184 / PCC 6803 / Kazusa).